We begin with the raw amino-acid sequence, 337 residues long: Manganese-dependent ADP-ribose/CDP-alcohol diphosphatase (337 aa).

Met1 bears the N-acetylmethionine mark. Residues Asp25, Gln27, Asp74, Asn110, His241, His278, and His280 each coordinate Zn(2+).

This sequence belongs to the ADPRibase-Mn family. As to quaternary structure, monomer. Mg(2+) serves as cofactor.

It carries out the reaction CDP-choline + H2O = phosphocholine + CMP + 2 H(+). It catalyses the reaction ADP-D-ribose + H2O = D-ribose 5-phosphate + AMP + 2 H(+). The enzyme catalyses CDP-glycerol + H2O = sn-glycerol 3-phosphate + CMP + 2 H(+). Functionally, hydrolyzes ADP-ribose, IDP-ribose, CDP-glycerol, CDP-choline and CDP-ethanolamine, but not other non-reducing ADP-sugars or CDP-glucose. May be involved in immune cell signaling as suggested by the second-messenger role of ADP-ribose, which activates TRPM2 as a mediator of oxidative/nitrosative stress. The sequence is that of Manganese-dependent ADP-ribose/CDP-alcohol diphosphatase (ADPRM) from Bos taurus (Bovine).